The primary structure comprises 109 residues: UPF0060 membrane protein mma_0129 (109 aa).

A run of 4 helical transmembrane segments spans residues 7–27 (VALF…PYLW), 31–51 (GASI…VWLL), 63–83 (AAYG…VDGI), and 87–107 (NWDF…LFAP).

Belongs to the UPF0060 family.

The protein localises to the cell inner membrane. The chain is UPF0060 membrane protein mma_0129 from Janthinobacterium sp. (strain Marseille) (Minibacterium massiliensis).